The following is a 1408-amino-acid chain: Protein patched homolog 1 (1408 aa).

Residues 1-20 are disordered; sequence MLTLLEPPGAKRSPTVGNYN. Over 1-136 the chain is Cytoplasmic; the sequence is MLTLLEPPGA…GNTVHRNAWS (136 aa). The chain crosses the membrane as a helical span at residues 137 to 157; it reads IILAVSMIFAVCCYGLQYVHI. Over 158 to 649 the chain is Extracellular; that stretch reads ETDIVKLWVA…STSIADMLEE (492 aa). Positions 455-479 are disordered; sequence STAPIPTTTTLSPEEARAAEEKEKK. Residues 468-479 are compositionally biased toward basic and acidic residues; that stretch reads EEARAAEEKEKK. The N-linked (GlcNAc...) asparagine glycan is linked to Asn599. Residues 650–670 traverse the membrane as a helical segment; the sequence is FCQFNYTIILAGYALMLAYAI. Residues 654-816 form the SSD domain; sequence NYTIILAGYA…LTIYPAIISI (163 aa). The Cytoplasmic portion of the chain corresponds to 671–686; it reads VTQARFDNCLPATESS. A helical transmembrane segment spans residues 687–707; sequence MGLALAGVLVVTFASVAGLGL. Residues 708 to 709 lie on the Extracellular side of the membrane; sequence AT. Residues 710–730 form a helical membrane-spanning segment; it reads WFGIEFNAATTQIVPFLTLGI. Over 731-765 the chain is Cytoplasmic; sequence GVDNMFMLLHNYRDVVKLAGGHAEMAILMRETGMS. A helical transmembrane segment spans residues 766 to 786; the sequence is ILCTSINNILSFLTGTLLPIP. Over 787 to 795 the chain is Extracellular; sequence ALRSFCAQS. The chain crosses the membrane as a helical span at residues 796 to 816; the sequence is SILLTFNFIAILTIYPAIISI. Over 817 to 901 the chain is Cytoplasmic; it reads DLRRKKAQRR…YYYIPFISKP (85 aa). A helical transmembrane segment spans residues 902–922; the sequence is ASKVAIIVGCCALLGASFIGM. Residues 923–1175 lie on the Extracellular side of the membrane; sequence RQSTLGLELG…QGIAFTFWEQ (253 aa). N-linked (GlcNAc...) asparagine glycosylation is found at Asn1026 and Asn1036. The helical transmembrane segment at 1176-1196 threads the bilayer; sequence YLFLTGNLMQAISIITISVFC. Topologically, residues 1197-1217 are cytoplasmic; sequence VISVLLFNPWAALMVVCILGI. Helical transmembrane passes span 1218–1238 and 1239–1259; these read MTCE…PVSA and VTLI…VVSF. Topologically, residues 1260-1276 are extracellular; that stretch reads LTALGTRSQRTSSAVDR. The chain crosses the membrane as a helical span at residues 1277–1297; sequence VFVPVIHGSFSTLLGILMLGF. Residues 1298–1305 lie on the Cytoplasmic side of the membrane; it reads SEFEFVVK. The helical transmembrane segment at 1306-1326 threads the bilayer; it reads YFFIVMTALICIGIINGLILL. At 1327 to 1408 the chain is on the extracellular side; sequence PVLLSWFGPR…GNNTRRLPAV (82 aa). The segment at 1342 to 1408 is disordered; the sequence is TGGKTTLTLP…GNNTRRLPAV (67 aa). Positions 1387–1408 are enriched in low complexity; sequence TTRTSGGNRGTVGNNTRRLPAV.

Belongs to the patched family. As to expression, germ line and its progenitors.

The protein resides in the membrane. Its function is as follows. Required but not essential for cytokinesis of mitotically proliferating germ cells. This is Protein patched homolog 1 (ptc-1) from Caenorhabditis elegans.